Here is a 623-residue protein sequence, read N- to C-terminus: Glutathione import ATP-binding protein GsiA (623 aa).

ABC transporter domains are found at residues 18–272 (VRNL…QGLL) and 317–567 (LQVS…RKLM). ATP-binding positions include 52–59 (GESGSGKS) and 360–367 (GESGCGKS).

The protein belongs to the ABC transporter superfamily. Glutathione importer (TC 3.A.1.5.11) family. The complex is composed of two ATP-binding proteins (GsiA), two transmembrane proteins (GsiC and GsiD) and a solute-binding protein (GsiB).

The protein resides in the cell inner membrane. The enzyme catalyses glutathione(out) + ATP + H2O = glutathione(in) + ADP + phosphate + H(+). Functionally, part of the ABC transporter complex GsiABCD involved in glutathione import. Responsible for energy coupling to the transport system. This Pectobacterium atrosepticum (strain SCRI 1043 / ATCC BAA-672) (Erwinia carotovora subsp. atroseptica) protein is Glutathione import ATP-binding protein GsiA.